The sequence spans 335 residues: Adenosine deaminase (335 aa).

Residues histidine 12 and histidine 14 each coordinate Zn(2+). Residues histidine 14 and aspartate 16 each contribute to the substrate site. Residue histidine 197 coordinates Zn(2+). Glutamate 200 acts as the Proton donor in catalysis. Residue aspartate 278 coordinates Zn(2+).

It belongs to the metallo-dependent hydrolases superfamily. Adenosine and AMP deaminases family. Adenosine deaminase subfamily. Zn(2+) is required as a cofactor.

It catalyses the reaction adenosine + H2O + H(+) = inosine + NH4(+). The catalysed reaction is 2'-deoxyadenosine + H2O + H(+) = 2'-deoxyinosine + NH4(+). Its function is as follows. Catalyzes the hydrolytic deamination of adenosine and 2-deoxyadenosine. In Clostridium botulinum (strain Okra / Type B1), this protein is Adenosine deaminase.